The chain runs to 499 residues: Diacylglycerol kinase 1 (499 aa).

Residues 41–194 (APCCPVVVFI…IDSWHIIMRM (154 aa)) form the DAGKc domain. The tract at residues 442-479 (PCKSKSVNDPSSPMCCSNHDDDERNSLEDEDEWEEGRK) is disordered. Polar residues predominate over residues 446-456 (KSVNDPSSPMC). The span at 459–468 (NHDDDERNSL) shows a compositional bias: basic and acidic residues.

It belongs to the eukaryotic diacylglycerol kinase family. As to quaternary structure, monomer. Highly expressed in roots.

The enzyme catalyses a 1,2-diacyl-sn-glycerol + ATP = a 1,2-diacyl-sn-glycero-3-phosphate + ADP + H(+). Functionally, phosphorylates the second messenger diacylglycerol (DAG) to generate phosphatidic acid (PA), another important signaling molecule. PA is required for plant development and responses to abiotic stress. May play a role in disease resistance responses to pathogen attack. Modulates root architecture by regulating the ratio of DAG and PA, which have opposite effect on the promotion or suppression of lateral roots vs seminal roots. Suppresses lateral root number, but promotes seminal root and crown root thickness. The protein is Diacylglycerol kinase 1 of Oryza sativa subsp. japonica (Rice).